The sequence spans 312 residues: Pyrimidine-specific ribonucleoside hydrolase RihA (312 aa).

The active site involves His240.

This sequence belongs to the IUNH family. RihA subfamily.

In terms of biological role, hydrolyzes cytidine or uridine to ribose and cytosine or uracil, respectively. This is Pyrimidine-specific ribonucleoside hydrolase RihA from Citrobacter koseri (strain ATCC BAA-895 / CDC 4225-83 / SGSC4696).